The primary structure comprises 436 residues: Histidinol dehydrogenase (436 aa).

NAD(+) contacts are provided by Tyr-136, Gln-198, and Asn-221. Substrate is bound by residues Ser-244, Gln-266, and His-269. 2 residues coordinate Zn(2+): Gln-266 and His-269. Catalysis depends on proton acceptor residues Glu-334 and His-335. Residues His-335, Asp-368, Glu-422, and His-427 each coordinate substrate. Residue Asp-368 coordinates Zn(2+). His-427 is a Zn(2+) binding site.

It belongs to the histidinol dehydrogenase family. Requires Zn(2+) as cofactor.

The enzyme catalyses L-histidinol + 2 NAD(+) + H2O = L-histidine + 2 NADH + 3 H(+). Its pathway is amino-acid biosynthesis; L-histidine biosynthesis; L-histidine from 5-phospho-alpha-D-ribose 1-diphosphate: step 9/9. Functionally, catalyzes the sequential NAD-dependent oxidations of L-histidinol to L-histidinaldehyde and then to L-histidine. This is Histidinol dehydrogenase from Dehalococcoides mccartyi (strain CBDB1).